Consider the following 220-residue polypeptide: CASP-like protein 4B1 (220 aa).

Topologically, residues 1–74 are cytoplasmic; it reads MAMVTTEAAA…RWRREDMLDK (74 aa). Residues 13–56 form a disordered region; that stretch reads TTAATAAAEKPQDVEKPDYAPYNGASTTADGGTGARARRGDGGG. The chain crosses the membrane as a helical span at residues 75-95; sequence SPLALHAAAAIFAFVALVLVA. Topologically, residues 96–109 are extracellular; the sequence is SNQHGDWMQFDRYQ. A helical membrane pass occupies residues 110–127; that stretch reads EYRYLLAIASLALLYSLA. The Cytoplasmic portion of the chain corresponds to 128-152; the sequence is QAARHAHRMRGGVDPVSSASARLLD. The helical transmembrane segment at 153–173 threads the bilayer; it reads FVGDQVVAYLLMSALSAAVPI. Residues 174-188 lie on the Extracellular side of the membrane; sequence TNRMRSAVVNNFTDA. Residue asparagine 184 is glycosylated (N-linked (GlcNAc...) asparagine). A helical transmembrane segment spans residues 189 to 209; the sequence is TAAAISMAFFSFVALALSAVV. The Cytoplasmic portion of the chain corresponds to 210–220; sequence SGYKLSKQTYM.

It belongs to the Casparian strip membrane proteins (CASP) family. As to quaternary structure, homodimer and heterodimers.

It localises to the cell membrane. This is CASP-like protein 4B1 from Sorghum bicolor (Sorghum).